A 467-amino-acid polypeptide reads, in one-letter code: 3-isopropylmalate dehydratase large subunit (467 aa).

Residues C348, C409, and C412 each coordinate [4Fe-4S] cluster. Residues 423–448 (NERSISTSNRNFEGRQGKGSRTHLAS) form a disordered region.

It belongs to the aconitase/IPM isomerase family. LeuC type 1 subfamily. Heterodimer of LeuC and LeuD. [4Fe-4S] cluster serves as cofactor.

It catalyses the reaction (2R,3S)-3-isopropylmalate = (2S)-2-isopropylmalate. Its pathway is amino-acid biosynthesis; L-leucine biosynthesis; L-leucine from 3-methyl-2-oxobutanoate: step 2/4. In terms of biological role, catalyzes the isomerization between 2-isopropylmalate and 3-isopropylmalate, via the formation of 2-isopropylmaleate. This is 3-isopropylmalate dehydratase large subunit from Bifidobacterium longum (strain DJO10A).